The primary structure comprises 476 residues: Glutamate--tRNA ligase 1 (476 aa).

The short motif at 9–19 (PSPTGFLHIGG) is the 'HIGH' region element. The 'KMSKS' region motif lies at 238–242 (KLSKR). An ATP-binding site is contributed by K241.

The protein belongs to the class-I aminoacyl-tRNA synthetase family. Glutamate--tRNA ligase type 1 subfamily. As to quaternary structure, monomer.

It localises to the cytoplasm. The enzyme catalyses tRNA(Glu) + L-glutamate + ATP = L-glutamyl-tRNA(Glu) + AMP + diphosphate. In terms of biological role, catalyzes the attachment of glutamate to tRNA(Glu) in a two-step reaction: glutamate is first activated by ATP to form Glu-AMP and then transferred to the acceptor end of tRNA(Glu). This chain is Glutamate--tRNA ligase 1, found in Bartonella bacilliformis (strain ATCC 35685 / KC583 / Herrer 020/F12,63).